The sequence spans 624 residues: LRR receptor kinase BAK1 (624 aa).

Residues 1-25 (MAAHRWAVWAVLLLRLLVPAARVLA) form the signal peptide. Topologically, residues 26-237 (NMEGDALHSL…QSPGSSSSTG (212 aa)) are extracellular. LRR repeat units follow at residues 91–115 (LKNL…LGNL), 117–139 (NLVS…LGNL), 140–163 (LKLR…LTAI), and 164–188 (TALQ…SFSL). Asparagine 103, asparagine 114, asparagine 127, asparagine 149, and asparagine 175 each carry an N-linked (GlcNAc...) asparagine glycan. The segment at 205 to 236 (TTKPCPGAPPFSPPPPYNPPTPVQSPGSSSST) is disordered. A compositionally biased stretch (pro residues) spans 210–227 (PGAPPFSPPPPYNPPTPV). A helical transmembrane segment spans residues 238 to 258 (AIAGGVAAGAALLFAIPAIGF). The Cytoplasmic segment spans residues 259 to 624 (AWYRRRKPQE…LHAVELSGPR (366 aa)). The 288-residue stretch at 301-588 (FSNKNILGRG…GLAERWEEWQ (288 aa)) folds into the Protein kinase domain. ATP is bound by residues 307–315 (LGRGGFGKV) and lysine 329. Catalysis depends on aspartate 428, which acts as the Proton acceptor.

The protein belongs to the protein kinase superfamily. Ser/Thr protein kinase family. Forms homodimers. Interacts with BRI1. Interacts with REM4.1. As to expression, expressed in developing lateral roots, shoot apex, leaf blades, lamina joints and flowers. Expressed at low levels in leaf sheaths and panicles.

It localises to the cell membrane. The enzyme catalyses L-seryl-[protein] + ATP = O-phospho-L-seryl-[protein] + ADP + H(+). The catalysed reaction is L-threonyl-[protein] + ATP = O-phospho-L-threonyl-[protein] + ADP + H(+). LRR receptor kinase involved in defense response. Does not seem to be required specifically for XA21-mediated immunity or basal resistance to Xanthomonas oryzae pv. oryzae (Xoo), or immunity to Magnaporthe oryzae. Involved in brassinosteroid (BR) signaling pathway. Acts as a coreceptor of BRI1. Forms at the plasma membrane a receptor complex with BRI1 which is activated in response to brassinolide. Phosphorylates BRI1. Required for normal plant growth and leaf development. Possesses kinase activity in vitro. This chain is LRR receptor kinase BAK1, found in Oryza sativa subsp. japonica (Rice).